We begin with the raw amino-acid sequence, 474 residues long: MTPTLKQLFEKHNVKGLSNNSKTIKANDAFFAIKNGNDFIADALEKGAALVITDDKKNTTNKVIFVEDIKETLHEAIELFYPKKPKTMIAVTGTNGKSSVVSYIAQIYSLIGQKAASIGTIGVEVFGIDNFNESIGGLTTTDYLSFRKIAHKLAKNGIDYLAFEASSHGLDQQRLGDLKVNVACFTSFSQDHLDYHHTKENYLLAKLKLFTDHLAKDGIAILNSDIEEIKFIKDYLDKHKIKYLCVGANGNCKITKTNSSLKGQNINFIFDNKNYDFDTPIIGSFQASNLLIAGPSVYYTSFDFSKVINALTKVKAVKGRMERVNRTNIFIDYAHTPDALEKALTELKNIKAKGGKLSIIFGCGGNRDTTKRKLMGKIAASIADNVIVTDDNPRHEDPKAIRQEIISGIVTTNYIEIADRKEAIKYGINNLKKDDILLIAGKGHENYQIIGDEKIRFDDAEVASMSFLATAGIQ.

Ser21 contacts UDP-N-acetyl-alpha-D-muramoyl-L-alanyl-D-glutamate. Position 93-99 (93-99 (GTNGKSS)) interacts with ATP. UDP-N-acetyl-alpha-D-muramoyl-L-alanyl-D-glutamate contacts are provided by residues 139-140 (TT), Ser166, Gln172, and Arg174. The residue at position 206 (Lys206) is an N6-carboxylysine. Meso-2,6-diaminopimelate-binding positions include Arg367, 391–394 (DNPR), Gly441, and Glu445. Positions 391–394 (DNPR) match the Meso-diaminopimelate recognition motif motif.

It belongs to the MurCDEF family. MurE subfamily. Requires Mg(2+) as cofactor. Carboxylation is probably crucial for Mg(2+) binding and, consequently, for the gamma-phosphate positioning of ATP.

The protein localises to the cytoplasm. The enzyme catalyses UDP-N-acetyl-alpha-D-muramoyl-L-alanyl-D-glutamate + meso-2,6-diaminopimelate + ATP = UDP-N-acetyl-alpha-D-muramoyl-L-alanyl-gamma-D-glutamyl-meso-2,6-diaminopimelate + ADP + phosphate + H(+). The protein operates within cell wall biogenesis; peptidoglycan biosynthesis. In terms of biological role, catalyzes the addition of meso-diaminopimelic acid to the nucleotide precursor UDP-N-acetylmuramoyl-L-alanyl-D-glutamate (UMAG) in the biosynthesis of bacterial cell-wall peptidoglycan. The sequence is that of UDP-N-acetylmuramoyl-L-alanyl-D-glutamate--2,6-diaminopimelate ligase from Rickettsia bellii (strain RML369-C).